A 383-amino-acid polypeptide reads, in one-letter code: L-aspartate/L-glutamate decarboxylase (383 aa).

Lysine 232 carries the post-translational modification N6-(pyridoxal phosphate)lysine.

This sequence belongs to the group II decarboxylase family. MfnA subfamily. As to quaternary structure, monomer. Pyridoxal 5'-phosphate serves as cofactor.

The catalysed reaction is L-aspartate + H(+) = beta-alanine + CO2. It catalyses the reaction L-glutamate + H(+) = 4-aminobutanoate + CO2. The enzyme catalyses L-cysteate + H(+) = taurine + CO2. It carries out the reaction 3-sulfino-L-alanine + H(+) = hypotaurine + CO2. It participates in cofactor biosynthesis; coenzyme A biosynthesis. Catalyzes the decarboxylation of L-aspartate to produce beta-alanine, and the decarboxylation of L-glutamate to produce 4-aminobutanoate. Can also use cysteate and, to a lesser extent, cysteine sulfite (3-sulfino-L-alanine), but not L-tyrosine. Specific activities toward L-aspartate and cysteate are higher than toward L-glutamate. The protein is L-aspartate/L-glutamate decarboxylase of Pyrococcus horikoshii (strain ATCC 700860 / DSM 12428 / JCM 9974 / NBRC 100139 / OT-3).